Reading from the N-terminus, the 390-residue chain is Altered inheritance of mitochondria protein 6 (390 aa).

The N-terminal stretch at 1 to 17 is a signal peptide; sequence MLGLKGCLTILIGYVIA.

It belongs to the AIM6 family.

The polypeptide is Altered inheritance of mitochondria protein 6 (Saccharomyces cerevisiae (strain ATCC 204508 / S288c) (Baker's yeast)).